A 445-amino-acid chain; its full sequence is Gamma-glutamyl phosphate reductase (445 aa).

This sequence belongs to the gamma-glutamyl phosphate reductase family.

The protein resides in the cytoplasm. The enzyme catalyses L-glutamate 5-semialdehyde + phosphate + NADP(+) = L-glutamyl 5-phosphate + NADPH + H(+). It functions in the pathway amino-acid biosynthesis; L-proline biosynthesis; L-glutamate 5-semialdehyde from L-glutamate: step 2/2. In terms of biological role, catalyzes the NADPH-dependent reduction of L-glutamate 5-phosphate into L-glutamate 5-semialdehyde and phosphate. The product spontaneously undergoes cyclization to form 1-pyrroline-5-carboxylate. In Synechococcus sp. (strain RCC307), this protein is Gamma-glutamyl phosphate reductase.